Reading from the N-terminus, the 331-residue chain is Ketol-acid reductoisomerase (NADP(+)) (331 aa).

The KARI N-terminal Rossmann domain occupies 1–181 (MKVYYEKDAN…GGSRSGVIET (181 aa)). Residues 24 to 27 (YGSQ), Arg47, and 82 to 85 (DQVQ) contribute to the NADP(+) site. The active site involves His107. Gly133 contributes to the NADP(+) binding site. A KARI C-terminal knotted domain is found at 182–327 (TFREETETDL…GELRGMMPWL (146 aa)). Asp190, Glu194, Glu226, and Glu230 together coordinate Mg(2+). A substrate-binding site is contributed by Ser251.

Belongs to the ketol-acid reductoisomerase family. Mg(2+) is required as a cofactor.

The catalysed reaction is (2R)-2,3-dihydroxy-3-methylbutanoate + NADP(+) = (2S)-2-acetolactate + NADPH + H(+). It carries out the reaction (2R,3R)-2,3-dihydroxy-3-methylpentanoate + NADP(+) = (S)-2-ethyl-2-hydroxy-3-oxobutanoate + NADPH + H(+). Its pathway is amino-acid biosynthesis; L-isoleucine biosynthesis; L-isoleucine from 2-oxobutanoate: step 2/4. It functions in the pathway amino-acid biosynthesis; L-valine biosynthesis; L-valine from pyruvate: step 2/4. Its function is as follows. Involved in the biosynthesis of branched-chain amino acids (BCAA). Catalyzes an alkyl-migration followed by a ketol-acid reduction of (S)-2-acetolactate (S2AL) to yield (R)-2,3-dihydroxy-isovalerate. In the isomerase reaction, S2AL is rearranged via a Mg-dependent methyl migration to produce 3-hydroxy-3-methyl-2-ketobutyrate (HMKB). In the reductase reaction, this 2-ketoacid undergoes a metal-dependent reduction by NADPH to yield (R)-2,3-dihydroxy-isovalerate. In Nitratidesulfovibrio vulgaris (strain ATCC 29579 / DSM 644 / CCUG 34227 / NCIMB 8303 / VKM B-1760 / Hildenborough) (Desulfovibrio vulgaris), this protein is Ketol-acid reductoisomerase (NADP(+)).